The primary structure comprises 269 residues: Type II iodothyronine deiodinase (269 aa).

Residues 1–7 (MGLLSVD) lie on the Lumenal side of the membrane. Residues 8–28 (LLITLQILPWFFSNCLFLALY) form a helical; Signal-anchor for type III membrane protein membrane-spanning segment. At 29-269 (DSVVLLKHVI…RUVPTCELIM (241 aa)) the chain is on the cytoplasmic side. Selenocysteine 128 is a catalytic residue. Residues selenocysteine 128 and selenocysteine 261 are each a non-standard amino acid (selenocysteine).

This sequence belongs to the iodothyronine deiodinase family. Predominantly monomer. Can form homodimers but homodimerization is not essential for enzyme activity.

The protein localises to the endoplasmic reticulum membrane. The enzyme catalyses 3,3',5-triiodo-L-thyronine + iodide + A + H(+) = L-thyroxine + AH2. It carries out the reaction 3,3'-diiodo-L-thyronine + iodide + A + H(+) = 3,3',5'-triiodo-L-thyronine + AH2. It catalyses the reaction 3'-iodo-L-thyronine + iodide + A + H(+) = 3',5'-diiodo-L-thyronine + AH2. The catalysed reaction is 3,3'-diiodothyronamine + iodide + A + H(+) = 3,3',5'-triiodothyronamine + AH2. The enzyme catalyses 3'-iodothyronamine + iodide + A + H(+) = 3',5'-diiodothyronamine + AH2. Functionally, plays a crucial role in the metabolism of thyroid hormones (TH) and has specific roles in TH activation and inactivation by deiodination. Catalyzes the deiodination of L-thyroxine (T4) to 3,5,3'-triiodothyronine (T3), 3,3',5'-triiodothyronine (rT3) to 3,3'-diiodothyronine (3,3'-T2) and 3',5'-diiodothyronine (3',5'-T2) to 3'-monoiodothyronine (3'-T1) via outer-ring deiodination (ORD). Catalyzes the phenolic ring deiodinations of 3,3',5'-triiodothyronamine and 3',5'- diiodothyronamine. This chain is Type II iodothyronine deiodinase (dio2), found in Neoceratodus forsteri (Australian lungfish).